The primary structure comprises 472 residues: Cysteine--tRNA ligase (472 aa).

Residue Cys-29 participates in Zn(2+) binding. The 'HIGH' region motif lies at 31-41 (PTVYNYIHIGN). Zn(2+) contacts are provided by Cys-214, His-239, and Glu-243. Residues 273–277 (KMSKS) carry the 'KMSKS' region motif. Lys-276 provides a ligand contact to ATP.

The protein belongs to the class-I aminoacyl-tRNA synthetase family. Monomer. Requires Zn(2+) as cofactor.

It localises to the cytoplasm. The catalysed reaction is tRNA(Cys) + L-cysteine + ATP = L-cysteinyl-tRNA(Cys) + AMP + diphosphate. This is Cysteine--tRNA ligase from Lactobacillus gasseri (strain ATCC 33323 / DSM 20243 / BCRC 14619 / CIP 102991 / JCM 1131 / KCTC 3163 / NCIMB 11718 / NCTC 13722 / AM63).